Here is a 75-residue protein sequence, read N- to C-terminus: DNA-directed RNA polymerase subunit omega (75 aa).

Belongs to the RNA polymerase subunit omega family. In cyanobacteria the RNAP catalytic core is composed of 2 alpha, 1 beta, 1 beta', 1 gamma and 1 omega subunit. When a sigma factor is associated with the core the holoenzyme is formed, which can initiate transcription.

It carries out the reaction RNA(n) + a ribonucleoside 5'-triphosphate = RNA(n+1) + diphosphate. Promotes RNA polymerase assembly. Latches the N- and C-terminal regions of the beta' subunit thereby facilitating its interaction with the beta and alpha subunits. This chain is DNA-directed RNA polymerase subunit omega, found in Picosynechococcus sp. (strain ATCC 27264 / PCC 7002 / PR-6) (Agmenellum quadruplicatum).